Reading from the N-terminus, the 160-residue chain is Cytochrome b6-f complex subunit 4 (160 aa).

The next 3 membrane-spanning stretches (helical) occupy residues 36–56, 95–115, and 131–151; these read LLYI…GLAV, LLGV…PFLE, and TIFL…ALPI.

It belongs to the cytochrome b family. PetD subfamily. The 4 large subunits of the cytochrome b6-f complex are cytochrome b6, subunit IV (17 kDa polypeptide, petD), cytochrome f and the Rieske protein, while the 4 small subunits are petG, petL, petM and petN. The complex functions as a dimer.

The protein localises to the plastid. It localises to the chloroplast thylakoid membrane. Component of the cytochrome b6-f complex, which mediates electron transfer between photosystem II (PSII) and photosystem I (PSI), cyclic electron flow around PSI, and state transitions. This chain is Cytochrome b6-f complex subunit 4, found in Anthoceros angustus (Hornwort).